Reading from the N-terminus, the 601-residue chain is Abscisic acid cluster transcription factor abl7 (601 aa).

Positions Cys-13–Cys-40 form a DNA-binding region, zn(2)-C6 fungal-type.

The protein localises to the nucleus. Transcription factor that regulates the expression of the gene cluster that mediates the biosynthesis of abscisic acid (ABA), a phytohormone that acts antagonistically toward salicylic acid (SA), jasmonic acid (JA) and ethylene (ETH) signaling, to impede plant defense responses. The protein is Abscisic acid cluster transcription factor abl7 of Leptosphaeria maculans (strain JN3 / isolate v23.1.3 / race Av1-4-5-6-7-8) (Blackleg fungus).